Reading from the N-terminus, the 394-residue chain is Elongation factor Tu 2 (394 aa).

Residues 10–204 (KPHVNVGTIG…ALDNYIPEPE (195 aa)) enclose the tr-type G domain. Residues 19-26 (GHVDHGKT) are G1. 19-26 (GHVDHGKT) is a binding site for GTP. Threonine 26 is a Mg(2+) binding site. Residues 60-64 (GITIS) are G2. A G3 region spans residues 81 to 84 (DCPG). GTP contacts are provided by residues 81–85 (DCPGH) and 136–139 (NKCD). The tract at residues 136 to 139 (NKCD) is G4. A G5 region spans residues 174 to 176 (SAL).

The protein belongs to the TRAFAC class translation factor GTPase superfamily. Classic translation factor GTPase family. EF-Tu/EF-1A subfamily. As to quaternary structure, monomer.

The protein localises to the cytoplasm. The catalysed reaction is GTP + H2O = GDP + phosphate + H(+). In terms of biological role, GTP hydrolase that promotes the GTP-dependent binding of aminoacyl-tRNA to the A-site of ribosomes during protein biosynthesis. The sequence is that of Elongation factor Tu 2 from Photobacterium profundum (strain SS9).